The primary structure comprises 396 residues: MAETSIRNFNINFGPQHPAAHGVLRLVLELDGEVVERVDPHIGLLHRGTEKLIEYKTYLQAIPYFDRLDYVAPMNQEHAFALAIERLLGIDVPIRGQLIRVLYSEISRILNHLLNITTQAMDVGALTPPLWGFEEREKLMVFYERASGARMHAAYFRPGGVHQDLPEKLVEDIGKWIDPFLKTVDDLDELLTENRIFKQRNADIGIVSLEDAWAWGFSGVMVRGSGAAWDLRKSQPYECYPEMDFDIPVGKNGDCYDRYLIRMEEMRQSAKIMRQCVERLLGKERVGPVSNMDGKVVPPKRAAMKRSMESLIHHFKLYTEGYHVPAGEVYAAVEAPKGEFGVYLVADGTNKPYRCKLRAPGFAHLQAMDFMCRGHLLADVTAVLGSLDIVFGEVDR.

The protein belongs to the complex I 49 kDa subunit family. As to quaternary structure, NDH-1 is composed of 14 different subunits. Subunits NuoB, C, D, E, F, and G constitute the peripheral sector of the complex.

It localises to the cell inner membrane. It catalyses the reaction a quinone + NADH + 5 H(+)(in) = a quinol + NAD(+) + 4 H(+)(out). In terms of biological role, NDH-1 shuttles electrons from NADH, via FMN and iron-sulfur (Fe-S) centers, to quinones in the respiratory chain. The immediate electron acceptor for the enzyme in this species is believed to be ubiquinone. Couples the redox reaction to proton translocation (for every two electrons transferred, four hydrogen ions are translocated across the cytoplasmic membrane), and thus conserves the redox energy in a proton gradient. This chain is NADH-quinone oxidoreductase subunit D, found in Chelativorans sp. (strain BNC1).